The sequence spans 251 residues: CDP-diacylglycerol pyrophosphatase (251 aa).

A helical membrane pass occupies residues G5–F25.

Belongs to the Cdh family.

The protein resides in the cell inner membrane. It carries out the reaction a CDP-1,2-diacyl-sn-glycerol + H2O = a 1,2-diacyl-sn-glycero-3-phosphate + CMP + 2 H(+). It functions in the pathway phospholipid metabolism; CDP-diacylglycerol degradation; phosphatidate from CDP-diacylglycerol: step 1/1. In Salmonella enteritidis PT4 (strain P125109), this protein is CDP-diacylglycerol pyrophosphatase.